We begin with the raw amino-acid sequence, 244 residues long: tRNA (guanine-N(7)-)-methyltransferase (244 aa).

S-adenosyl-L-methionine is bound by residues glutamate 75, glutamate 100, aspartate 127, and aspartate 150. The active site involves aspartate 150. Residues lysine 154, aspartate 186, and 223–226 contribute to the substrate site; that span reads TRFE.

This sequence belongs to the class I-like SAM-binding methyltransferase superfamily. TrmB family.

The enzyme catalyses guanosine(46) in tRNA + S-adenosyl-L-methionine = N(7)-methylguanosine(46) in tRNA + S-adenosyl-L-homocysteine. Its pathway is tRNA modification; N(7)-methylguanine-tRNA biosynthesis. Its function is as follows. Catalyzes the formation of N(7)-methylguanine at position 46 (m7G46) in tRNA. The sequence is that of tRNA (guanine-N(7)-)-methyltransferase from Xylella fastidiosa (strain M23).